The sequence spans 186 residues: Peptide deformylase (186 aa).

The Fe cation site is built by C113 and H156. E157 is an active-site residue. H160 serves as a coordination point for Fe cation.

It belongs to the polypeptide deformylase family. It depends on Fe(2+) as a cofactor.

It catalyses the reaction N-terminal N-formyl-L-methionyl-[peptide] + H2O = N-terminal L-methionyl-[peptide] + formate. In terms of biological role, removes the formyl group from the N-terminal Met of newly synthesized proteins. Requires at least a dipeptide for an efficient rate of reaction. N-terminal L-methionine is a prerequisite for activity but the enzyme has broad specificity at other positions. This is Peptide deformylase from Ligilactobacillus salivarius (strain UCC118) (Lactobacillus salivarius).